Consider the following 144-residue polypeptide: Eukaryotic translation initiation factor 1A, X-chromosomal (144 aa).

Positions 1-15 (MPKNKGKGGKNRRRG) are enriched in basic residues. Disordered stretches follow at residues 1–26 (MPKNKGKGGKNRRRGKNENESEKREL) and 114–144 (KINETDTFGPGDDDEIQFDDIGDDDEDIDDI). The segment covering 16-26 (KNENESEKREL) has biased composition (basic and acidic residues). Residues 22–96 (EKRELVFKED…NKADVILKYN (75 aa)) form the S1-like domain. Over residues 124–144 (GDDDEIQFDDIGDDDEDIDDI) the composition is skewed to acidic residues.

It belongs to the eIF-1A family. Component of the 43S pre-initiation complex (43S PIC), which is composed of the 40S ribosomal subunit, EIF1, eIF1A (EIF1AX), eIF3 complex, EIF5 and eIF2-GTP-initiator tRNA complex (eIF2 ternary complex). Interacts with EIF5; this interaction contributes to the maintenance of EIF1 within the open 43S PIC. Interacts through its C-terminal domain (CTD) with the CTD of EIF5B; from the location of the start codon by the 43S complex until the formation of the 80S complex. As to quaternary structure, (Microbial infection) Interacts with human respiratory syncytial virus (HRSV) nucleoprotein; this interaction recruits EIF1AX to the viral replication complex to facilitate viral genomic RNA synthesis and virus production.

Its subcellular location is the cytoplasm. Component of the 43S pre-initiation complex (43S PIC), which binds to the mRNA cap-proximal region, scans mRNA 5'-untranslated region, and locates the initiation codon. This protein enhances formation of the cap-proximal complex. Together with EIF1, facilitates scanning, start codon recognition, promotion of the assembly of 48S complex at the initiation codon (43S PIC becomes 48S PIC after the start codon is reached), and dissociation of aberrant complexes. After start codon location, together with EIF5B orients the initiator methionine-tRNA in a conformation that allows 60S ribosomal subunit joining to form the 80S initiation complex. Is released after 80S initiation complex formation, just after GTP hydrolysis by EIF5B, and before release of EIF5B. Its globular part is located in the A site of the 40S ribosomal subunit. Its interaction with EIF5 during scanning contribute to the maintenance of EIF1 within the open 43S PIC. In contrast to yeast orthologs, does not bind EIF1. This is Eukaryotic translation initiation factor 1A, X-chromosomal (EIF1AX) from Homo sapiens (Human).